We begin with the raw amino-acid sequence, 378 residues long: Lactosylceramide 1,3-N-acetyl-beta-D-glucosaminyltransferase (378 aa).

Residues 1–14 (MRMLVSGRRVKKWQ) lie on the Cytoplasmic side of the membrane. Residues 15–35 (LIIQLFATCFLASLMFFWEPI) form a helical; Signal-anchor for type II membrane protein membrane-spanning segment. The Lumenal segment spans residues 36-378 (DNHIVSHMKS…DTYPCRAAFI (343 aa)). An N-linked (GlcNAc...) asparagine glycan is attached at Asn59.

Belongs to the glycosyltransferase 31 family. In terms of tissue distribution, widely expressed. Highly expressed in lung, colon, placenta, testis, pituitary gland and cerebellum. Weakly expressed in brain, liver, spleen, lymph node and thymus.

Its subcellular location is the golgi apparatus membrane. The catalysed reaction is a beta-D-Gal-(1-&gt;4)-beta-D-Glc-(1&lt;-&gt;1)-Cer(d18:1(4E)) + UDP-N-acetyl-alpha-D-glucosamine = a beta-D-GlcNAc-(1-&gt;3)-beta-D-Gal-(1-&gt;4)-beta-D-Glc-(1&lt;-&gt;1)-Cer(d18:1(4E)) + UDP + H(+). It catalyses the reaction a neolactoside nLc4Cer(d18:1(4E)) + UDP-N-acetyl-alpha-D-glucosamine = a neolactoside IV(3)-beta-GlcNAc-nLc4Cer(d18:1(4E)) + UDP + H(+). It participates in protein modification; protein glycosylation. Its function is as follows. Beta-1,3-N-acetylglucosaminyltransferase that plays a key role in the synthesis of lacto- or neolacto-series carbohydrate chains on glycolipids, notably by participating in biosynthesis of HNK-1 and Lewis X carbohydrate structures. Has strong activity toward lactosylceramide (LacCer) and neolactotetraosylceramide (nLc(4)Cer; paragloboside), resulting in the synthesis of Lc(3)Cer and neolactopentaosylceramide (nLc(5)Cer), respectively. Probably plays a central role in regulating neolacto-series glycolipid synthesis during embryonic development. This is Lactosylceramide 1,3-N-acetyl-beta-D-glucosaminyltransferase from Homo sapiens (Human).